The chain runs to 475 residues: UDP-N-acetylmuramate--L-alanine ligase (475 aa).

Residue 125–131 (GTHGKTT) coordinates ATP.

Belongs to the MurCDEF family.

Its subcellular location is the cytoplasm. It catalyses the reaction UDP-N-acetyl-alpha-D-muramate + L-alanine + ATP = UDP-N-acetyl-alpha-D-muramoyl-L-alanine + ADP + phosphate + H(+). It participates in cell wall biogenesis; peptidoglycan biosynthesis. In terms of biological role, cell wall formation. This Actinobacillus pleuropneumoniae serotype 7 (strain AP76) protein is UDP-N-acetylmuramate--L-alanine ligase.